The chain runs to 150 residues: MSEVASVTDAQIEKFSLLYKERRKVQMMRFFGVTALTLISARLAFKGVASRKYIPTMFQLNHKPPPFSYKGEVVNALAYGTALSTGGFAMLGFGLCWIWDVSTLKELGNKLKELMGDGSEKDKLVSTNMDLDEDTQKVADALEAMLSTKK.

Helical transmembrane passes span 28–45 (MRFF…RLAF) and 77–99 (LAYG…CWIW).

This sequence belongs to the AIM11 family.

Its subcellular location is the membrane. This is Altered inheritance of mitochondria protein 11 (AIM11) from Kluyveromyces lactis (strain ATCC 8585 / CBS 2359 / DSM 70799 / NBRC 1267 / NRRL Y-1140 / WM37) (Yeast).